The sequence spans 120 residues: Large ribosomal subunit protein bL21 (120 aa).

This sequence belongs to the bacterial ribosomal protein bL21 family. In terms of assembly, part of the 50S ribosomal subunit. Contacts protein L20.

Functionally, this protein binds to 23S rRNA in the presence of protein L20. The sequence is that of Large ribosomal subunit protein bL21 from Rhizorhabdus wittichii (strain DSM 6014 / CCUG 31198 / JCM 15750 / NBRC 105917 / EY 4224 / RW1) (Sphingomonas wittichii).